A 370-amino-acid chain; its full sequence is MPSAKPLFCLATLAGAALAAPAPSRVSDFTKRSTCTFTDAATASESKTSCSDIVLKDITVPAGETLNLKDLNDGTTVTFEGTTTWEYEEWDGPLLRISGKDITVTQSSDAVLDGNGAKWWDGEGTNGGKTKPKFFYAHDLDDSKISGLYIKNTPVQAISVESDNLVIEDVTIDNSDGDSEGGHNTDGFDISESTYITITGATVKNQDDCVAINSGENIYFSGGTCSGGHGLSIGSVGGRDDNTVKNVTFIDSTVSDSENGVRIKTVYDATGTVEDITYSNIQLSGISDYGIVIEQDYENGDPTGTPSNGVTISDVTLEDITGSVDSDAVEIYILCGDGSCSDWTMSGIDITGGETSSDCENVPSGASCDQ.

The first 19 residues, 1–19, serve as a signal peptide directing secretion; sequence MPSAKPLFCLATLAGAALA. Positions 20–32 are excised as a propeptide; the sequence is APAPSRVSDFTKR. A disulfide bond links Cys35 and Cys50. PbH1 repeat units follow at residues 162 to 192, 193 to 214, 215 to 235, 244 to 265, 273 to 295, and 307 to 352; these read SDNL…DISE, STYI…AINS, GENI…SIGS, VKNV…RIKT, VEDI…VIEQ, and SNGV…DITG. Catalysis depends on Asp207, which acts as the Proton donor. Cys209 and Cys225 are joined by a disulfide. His229 is a catalytic residue. The N-linked (GlcNAc...) asparagine glycan is linked to Asn246. 2 disulfide bridges follow: Cys335/Cys340 and Cys359/Cys368.

It belongs to the glycosyl hydrolase 28 family.

It localises to the secreted. The enzyme catalyses (1,4-alpha-D-galacturonosyl)n+m + H2O = (1,4-alpha-D-galacturonosyl)n + (1,4-alpha-D-galacturonosyl)m.. Involved in maceration and soft-rotting of plant tissue. Hydrolyzes the 1,4-alpha glycosidic bonds of de-esterified pectate in the smooth region of the plant cell wall. This Aspergillus niger (strain ATCC MYA-4892 / CBS 513.88 / FGSC A1513) protein is Probable endopolygalacturonase A (pgaA).